The chain runs to 134 residues: uncharacterized protein (134 aa).

The N-terminal stretch at 1–16 (MAKAVALLLAAIAASA) is a signal peptide.

This is an uncharacterized protein from Oryza sativa subsp. indica (Rice).